Reading from the N-terminus, the 220-residue chain is MSKNELKKAAAMEAIQFVKNVNIVGVGTGSTVNYFIDALAEIKHQIEGAVASSVATENRLKEHRIPVVDLNSVSNVDVYVDGADEFNKHFYLTKGGGGALTREKIIAAAAKRFICIVDESKQVDVLGQFPLPIEVIPMARSFVAREIVKLKGDPVYRQGFTTDNGNVILDIHNLTILNPVELEAILNNIPGVIANGLFAQQPADDLLIGTPAGVQLHHRK.

Substrate is bound by residues 28–31 (TGST), 81–84 (DGAD), and 94–97 (KGGG). Glu103 (proton acceptor) is an active-site residue. Lys121 is a binding site for substrate.

The protein belongs to the ribose 5-phosphate isomerase family. Homodimer.

The catalysed reaction is aldehydo-D-ribose 5-phosphate = D-ribulose 5-phosphate. The protein operates within carbohydrate degradation; pentose phosphate pathway; D-ribose 5-phosphate from D-ribulose 5-phosphate (non-oxidative stage): step 1/1. Catalyzes the reversible conversion of ribose-5-phosphate to ribulose 5-phosphate. This Coxiella burnetii (strain CbuK_Q154) (Coxiella burnetii (strain Q154)) protein is Ribose-5-phosphate isomerase A.